Reading from the N-terminus, the 217-residue chain is Cytidylate kinase (217 aa).

9–17 (GPAGAGKST) is a binding site for ATP.

This sequence belongs to the cytidylate kinase family. Type 1 subfamily.

It localises to the cytoplasm. The enzyme catalyses CMP + ATP = CDP + ADP. It catalyses the reaction dCMP + ATP = dCDP + ADP. The sequence is that of Cytidylate kinase from Clostridium acetobutylicum (strain ATCC 824 / DSM 792 / JCM 1419 / IAM 19013 / LMG 5710 / NBRC 13948 / NRRL B-527 / VKM B-1787 / 2291 / W).